Here is a 354-residue protein sequence, read N- to C-terminus: Bergaptol O-methyltransferase (354 aa).

Position 121 (His121) interacts with bergaptol. Residues Ser174, Gly198, Asp221, and Lys255 each coordinate S-adenosyl-L-homocysteine. His259 contacts bergaptol. His259 (proton acceptor) is an active-site residue.

It belongs to the class I-like SAM-binding methyltransferase superfamily. Cation-independent O-methyltransferase family. COMT subfamily.

The catalysed reaction is a 5-hydroxyfurocoumarin + S-adenosyl-L-methionine = a 5-methoxyfurocoumarin + S-adenosyl-L-homocysteine + H(+). It catalyses the reaction bergaptol + S-adenosyl-L-methionine = bergapten + S-adenosyl-L-homocysteine. Inhibited by Cu(2+), Ni(2+) and Co(2+). This Ammi majus (Bishop's weed) protein is Bergaptol O-methyltransferase.